The sequence spans 594 residues: Pentatricopeptide repeat-containing protein At1g15480, mitochondrial (594 aa).

The transit peptide at 1–67 (MFALSKVLRR…WSSSTGRRSL (67 aa)) directs the protein to the mitochondrion. A compositionally biased stretch (low complexity) spans 62–75 (TGRRSLSSDAGAKT). Residues 62–109 (TGRRSLSSDAGAKTTGDDDDLEDKNVDLATPDETSSDSEDGEEFSGDE) are disordered. The span at 95–109 (TSSDSEDGEEFSGDE) shows a compositional bias: acidic residues. PPR repeat units follow at residues 226–260 (GELV…GFPL), 261–294 (STFT…NLKP), 295–329 (NLNT…GVEL), 330–364 (DLRA…SLEE), 432–466 (SSNV…GCNI), 467–502 (GALT…QIKP), and 503–537 (LMSS…GYQS).

Belongs to the PPR family. P subfamily.

It is found in the mitochondrion. The sequence is that of Pentatricopeptide repeat-containing protein At1g15480, mitochondrial from Arabidopsis thaliana (Mouse-ear cress).